The following is a 309-amino-acid chain: NADH-cytochrome b5 reductase 1 (309 aa).

A helical membrane pass occupies residues 30–50 (FVPYAVALTAILAGLKLFTGG). An FAD-binding FR-type domain is found at 60–165 (TEFQEFVLKE…RGPKGAMVYT (106 aa)). FAD-binding positions include 145 to 160 (TTLKIGDTMKVRGPKG) and 171 to 208 (HIGMIAGGTGITPMLQIIKAVIRNRPRNGGNDTTKLDL).

This sequence belongs to the flavoprotein pyridine nucleotide cytochrome reductase family. In terms of assembly, monomer. Component of the 2-(3-amino-3-carboxypropyl)histidine synthase complex composed of dph1, dph2, dph3 and a NADH-dependent reductase, predominantly cbr1. It depends on FAD as a cofactor.

It localises to the mitochondrion outer membrane. It carries out the reaction 2 Fe(III)-[cytochrome b5] + NADH = 2 Fe(II)-[cytochrome b5] + NAD(+) + H(+). The enzyme catalyses 2 Fe(3+)-[Dph3] + NADH = 2 Fe(2+)-[Dph3] + NAD(+) + H(+). It functions in the pathway protein modification; peptidyl-diphthamide biosynthesis. Its function is as follows. NADH-dependent reductase for dph3 and cytochrome b5. Required for the first step of diphthamide biosynthesis, a post-translational modification of histidine which occurs in elongation factor 2. Dph1 and dph2 transfer a 3-amino-3-carboxypropyl (ACP) group from S-adenosyl-L-methionine (SAM) to a histidine residue, the reaction is assisted by a reduction system comprising dph3 and a NADH-dependent reductase, predominantly cbr1. By reducing dph3, also involved in the formation of the tRNA wobble base modification mcm5s 2U (5-methoxycarbonylmethyl-2-thiouridine), mediated by the elongator complex. The cytochrome b5/NADH cytochrome b5 reductase electron transfer system supports the catalytic activity of several sterol biosynthetic enzymes. In Neosartorya fischeri (strain ATCC 1020 / DSM 3700 / CBS 544.65 / FGSC A1164 / JCM 1740 / NRRL 181 / WB 181) (Aspergillus fischerianus), this protein is NADH-cytochrome b5 reductase 1 (cbr1).